A 540-amino-acid polypeptide reads, in one-letter code: Chaperonin GroEL (540 aa).

ATP contacts are provided by residues 29 to 32, 86 to 90, Gly-413, 476 to 478, and Asp-492; these read TLGP, DGTTT, and NAA.

This sequence belongs to the chaperonin (HSP60) family. As to quaternary structure, forms a cylinder of 14 subunits composed of two heptameric rings stacked back-to-back. Interacts with the co-chaperonin GroES.

The protein localises to the cytoplasm. The enzyme catalyses ATP + H2O + a folded polypeptide = ADP + phosphate + an unfolded polypeptide.. Functionally, together with its co-chaperonin GroES, plays an essential role in assisting protein folding. The GroEL-GroES system forms a nano-cage that allows encapsulation of the non-native substrate proteins and provides a physical environment optimized to promote and accelerate protein folding. The chain is Chaperonin GroEL from Geobacillus thermodenitrificans (strain NG80-2).